A 1720-amino-acid chain; its full sequence is TOG array regulator of axonemal microtubules protein 1 (1720 aa).

TOG stretches follow at residues 94–312 and 352–596; these read EEDT…RRLE and PQEL…MPSS. HEAT repeat units follow at residues 175 to 212, 214 to 247, 251 to 289, 345 to 384, 390 to 427, 431 to 466, 467 to 504, and 506 to 543; these read AFSL…RSPG, VLRT…TEDL, LDLT…RLGQ, NLKF…KFNP, SSLV…RLGE, QFLG…MKEV, GPQQ…YPSE, and FDLP…SMGS. 4 stretches are compositionally biased toward polar residues: residues 794 to 809, 819 to 829, 842 to 852, and 868 to 877; these read FGSQ…QNPS, PVSSPRTSPKH, DNSVNFSNSWP, and LVSQKSSDPT. Disordered stretches follow at residues 794–924, 970–998, and 1067–1087; these read FGSQ…SLLP, HSSL…ESPD, and KKIS…NPQQ. The segment covering 1073–1087 has biased composition (polar residues); that stretch reads AEQSPSAGSSSNPQQ. Residues 1256–1425 are TOG 3; sequence EIALTEALRL…YIKDSVRNLQ (170 aa). HEAT repeat units follow at residues 1294–1331 and 1335–1372; these read TKLH…YLKK and QELD…NVTP. Residues 1430–1462 form a disordered region; it reads GEIPLDTPSAKGRRSHTGSVGNTRSSSVSRDAF. Positions 1446-1458 are enriched in polar residues; that stretch reads TGSVGNTRSSSVS. A TOG 4 region spans residues 1484–1720; the sequence is SLESAEYLKL…LLDMTILNEL (237 aa). HEAT repeat units follow at residues 1485–1522, 1526–1563, and 1567–1605; these read LESA…NNQD, GNIV…LLRD, and PIIN…HVDN.

Belongs to the Crescerin family. In terms of assembly, interacts with ARMC9, CCDC66, CEP104 and CSPP1.

It is found in the cell projection. The protein localises to the cilium. It localises to the cytoplasm. Its subcellular location is the cytoskeleton. The protein resides in the cilium axoneme. Functionally, involved in ciliogenesis. It is required for appropriate acetylation and polyglutamylation of ciliary microtubules, and regulation of cilium length. Interacts with microtubules and promotes microtubule polymerization via its HEAT repeat domains, especially those in TOG region 2 and 4. The chain is TOG array regulator of axonemal microtubules protein 1 from Homo sapiens (Human).